The sequence spans 119 residues: UPF0342 protein Athe_0692 (119 aa).

The protein belongs to the UPF0342 family.

This is UPF0342 protein Athe_0692 from Caldicellulosiruptor bescii (strain ATCC BAA-1888 / DSM 6725 / KCTC 15123 / Z-1320) (Anaerocellum thermophilum).